We begin with the raw amino-acid sequence, 241 residues long: Ribonuclease PH (241 aa).

Residues Arg89 and 127 to 129 each bind phosphate; that span reads GTR.

This sequence belongs to the RNase PH family. As to quaternary structure, homohexameric ring arranged as a trimer of dimers.

The enzyme catalyses tRNA(n+1) + phosphate = tRNA(n) + a ribonucleoside 5'-diphosphate. Functionally, phosphorolytic 3'-5' exoribonuclease that plays an important role in tRNA 3'-end maturation. Removes nucleotide residues following the 3'-CCA terminus of tRNAs; can also add nucleotides to the ends of RNA molecules by using nucleoside diphosphates as substrates, but this may not be physiologically important. Probably plays a role in initiation of 16S rRNA degradation (leading to ribosome degradation) during starvation. The protein is Ribonuclease PH of Xanthomonas axonopodis pv. citri (strain 306).